A 270-amino-acid chain; its full sequence is Shikimate dehydrogenase (NADP(+)) (270 aa).

Shikimate is bound by residues 14 to 16 (SKS) and T61. Residue K65 is the Proton acceptor of the active site. 2 residues coordinate shikimate: N86 and D101. NADP(+)-binding positions include 126 to 130 (GAGGA), 150 to 155 (NRTVSK), and M213. Y215 provides a ligand contact to shikimate. G237 provides a ligand contact to NADP(+).

The protein belongs to the shikimate dehydrogenase family. In terms of assembly, homodimer.

The catalysed reaction is shikimate + NADP(+) = 3-dehydroshikimate + NADPH + H(+). Its pathway is metabolic intermediate biosynthesis; chorismate biosynthesis; chorismate from D-erythrose 4-phosphate and phosphoenolpyruvate: step 4/7. Involved in the biosynthesis of the chorismate, which leads to the biosynthesis of aromatic amino acids. Catalyzes the reversible NADPH linked reduction of 3-dehydroshikimate (DHSA) to yield shikimate (SA). The chain is Shikimate dehydrogenase (NADP(+)) from Hahella chejuensis (strain KCTC 2396).